A 131-amino-acid polypeptide reads, in one-letter code: Large ribosomal subunit protein bL12 (131 aa).

The span at 99–125 (ESTPKPIKEGTNKDDAEETKKKLEEAG) shows a compositional bias: basic and acidic residues. The tract at residues 99–131 (ESTPKPIKEGTNKDDAEETKKKLEEAGAKVTVK) is disordered.

Belongs to the bacterial ribosomal protein bL12 family. As to quaternary structure, homodimer. Part of the ribosomal stalk of the 50S ribosomal subunit. Forms a multimeric L10(L12)X complex, where L10 forms an elongated spine to which 2 to 4 L12 dimers bind in a sequential fashion. Binds GTP-bound translation factors.

Functionally, forms part of the ribosomal stalk which helps the ribosome interact with GTP-bound translation factors. Is thus essential for accurate translation. This Gloeothece citriformis (strain PCC 7424) (Cyanothece sp. (strain PCC 7424)) protein is Large ribosomal subunit protein bL12.